We begin with the raw amino-acid sequence, 445 residues long: Phosphoglucosamine mutase (445 aa).

Ser-102 (phosphoserine intermediate) is an active-site residue. Mg(2+)-binding residues include Ser-102, Asp-241, Asp-243, and Asp-245. Phosphoserine is present on Ser-102.

It belongs to the phosphohexose mutase family. The cofactor is Mg(2+). In terms of processing, activated by phosphorylation.

The enzyme catalyses alpha-D-glucosamine 1-phosphate = D-glucosamine 6-phosphate. Functionally, catalyzes the conversion of glucosamine-6-phosphate to glucosamine-1-phosphate. In Novosphingobium aromaticivorans (strain ATCC 700278 / DSM 12444 / CCUG 56034 / CIP 105152 / NBRC 16084 / F199), this protein is Phosphoglucosamine mutase.